The primary structure comprises 277 residues: MALIKVKPTSPGRRSVVKVVTPELHKGKPYAPLLEKQSKKAGRNNNGHITTRHQGGGHKQHYRIVDFRRNKDGIPAKVERLEYDPNRSAHLALLVYADGERRYIIAPRGVSVGAQLVSGSDAPIRAGNALPLRNIPVGSTIHCIELQPGKGAQVARSAGTSVQLLAREGSYAQLRLRSGEVRRVHVDCKATIGEVGNEEHSLRSIGKAGAVRWRGVRPTVRGVVMNPVDHPHGGGEGKTAAGMNPVSPWGLPTKGYRTRSNKRTDNMRVSRRPANKR.

Disordered regions lie at residues 35–60 and 225–277; these read EKQSKKAGRNNNGHITTRHQGGGHKQ and MNPV…ANKR. A compositionally biased stretch (polar residues) spans 43-53; sequence RNNNGHITTRH.

Belongs to the universal ribosomal protein uL2 family. In terms of assembly, part of the 50S ribosomal subunit. Forms a bridge to the 30S subunit in the 70S ribosome.

Its function is as follows. One of the primary rRNA binding proteins. Required for association of the 30S and 50S subunits to form the 70S ribosome, for tRNA binding and peptide bond formation. It has been suggested to have peptidyltransferase activity; this is somewhat controversial. Makes several contacts with the 16S rRNA in the 70S ribosome. This chain is Large ribosomal subunit protein uL2, found in Methylobacillus flagellatus (strain ATCC 51484 / DSM 6875 / VKM B-1610 / KT).